Here is a 170-residue protein sequence, read N- to C-terminus: uncharacterized protein (170 aa).

This is an uncharacterized protein from Arabidopsis thaliana (Mouse-ear cress).